Reading from the N-terminus, the 519-residue chain is MSNNVIIFDTTLRDGEQALQASLSVKEKLQIAYALERLGVDIIEAGFPVSSPGDFESVQTIAREIKNSRICALARCVDNDIDVAAESLNIAEAFRIHVFLATSALHAEHKLKKSFDDIIEMGTRSIKRARRYTDDVEFSCEDAGRTHIDNLCRIVESAINAGATTINIPDTVGYTTPYQFGGIITNLFERVPNIDKAVISVHCHDDLGMAVANSITAVQAGARQVEGTINGLGERAGNCALEEVIMAIKVREQMMNVQTRINHKEIYRTSQLVSQLCNTPIHANKSIVGSNAFAHSSGIHQDGVLKNRETYEIMTPESIGLKEVQLNLTSRSGRAAVKHRMEEMGYRETDYNLDSLYAAFLRLADKKGQVFDYDLEALAFMGQQQQEPDEFVMNYFNTQSGSSTVATASVSISRKNEEITEAATGNGPVDAVYQAISRATGYPLKLVTYQLTAKGEGRDALGQVDIVVEYQGRKFHGMGLETDIVGSSANAMMHVINSIWRSEQVEIEKRKHHTTQEAV.

The region spanning 5–267 is the Pyruvate carboxyltransferase domain; it reads VIIFDTTLRD…QTRINHKEIY (263 aa). Positions 14, 202, 204, and 238 each coordinate Mn(2+). Residues 392–519 form a regulatory domain region; the sequence is VMNYFNTQSG…RKHHTTQEAV (128 aa).

This sequence belongs to the alpha-IPM synthase/homocitrate synthase family. LeuA type 1 subfamily. As to quaternary structure, homodimer. It depends on Mn(2+) as a cofactor.

Its subcellular location is the cytoplasm. It catalyses the reaction 3-methyl-2-oxobutanoate + acetyl-CoA + H2O = (2S)-2-isopropylmalate + CoA + H(+). It participates in amino-acid biosynthesis; L-leucine biosynthesis; L-leucine from 3-methyl-2-oxobutanoate: step 1/4. Functionally, catalyzes the condensation of the acetyl group of acetyl-CoA with 3-methyl-2-oxobutanoate (2-ketoisovalerate) to form 3-carboxy-3-hydroxy-4-methylpentanoate (2-isopropylmalate). The sequence is that of 2-isopropylmalate synthase from Proteus mirabilis (strain HI4320).